A 158-amino-acid polypeptide reads, in one-letter code: NADH-quinone oxidoreductase subunit B 2 (158 aa).

[4Fe-4S] cluster is bound by residues cysteine 37, cysteine 38, cysteine 102, and cysteine 132.

This sequence belongs to the complex I 20 kDa subunit family. In terms of assembly, NDH-1 is composed of 14 different subunits. Subunits NuoB, C, D, E, F, and G constitute the peripheral sector of the complex. [4Fe-4S] cluster serves as cofactor.

The protein resides in the cell inner membrane. It carries out the reaction a quinone + NADH + 5 H(+)(in) = a quinol + NAD(+) + 4 H(+)(out). In terms of biological role, NDH-1 shuttles electrons from NADH, via FMN and iron-sulfur (Fe-S) centers, to quinones in the respiratory chain. Couples the redox reaction to proton translocation (for every two electrons transferred, four hydrogen ions are translocated across the cytoplasmic membrane), and thus conserves the redox energy in a proton gradient. The polypeptide is NADH-quinone oxidoreductase subunit B 2 (Nitrosospira multiformis (strain ATCC 25196 / NCIMB 11849 / C 71)).